We begin with the raw amino-acid sequence, 101 residues long: Interleukin-8 (101 aa).

Positions 1–22 are cleaved as a signal peptide; it reads MTSKLAVALLAAFLLSAALCEG. At arginine 27 the chain carries Citrulline. Cystine bridges form between cysteine 34/cysteine 61 and cysteine 36/cysteine 77.

Belongs to the intercrine alpha (chemokine CxC) family. Homodimer. Interacts with TNFAIP6 (via Link domain); this interaction interferes with chemokine binding to glycosaminoglycans. Citrullination at Arg-27 prevents proteolysis, and dampens tissue inflammation, it also enhances leukocytosis, possibly through impaired chemokine clearance from the blood circulation.

It is found in the secreted. In terms of biological role, chemotactic factor that mediates inflammatory response by attracting neutrophils, basophils, and T-cells to clear pathogens and protect the host from infection. Also plays an important role in neutrophil activation. Released in response to an inflammatory stimulus, exerts its effect by binding to the G-protein-coupled receptors CXCR1 and CXCR2, primarily found in neutrophils, monocytes and endothelial cells. G-protein heterotrimer (alpha, beta, gamma subunits) constitutively binds to CXCR1/CXCR2 receptor and activation by IL8 leads to beta and gamma subunits release from Galpha (GNAI2 in neutrophils) and activation of several downstream signaling pathways including PI3K and MAPK pathways. The polypeptide is Interleukin-8 (CXCL8) (Cercocebus atys (Sooty mangabey)).